The following is a 292-amino-acid chain: Siderophore triacetylfusarinine C esterase (292 aa).

6 residues coordinate triacetylfusarinine C: Arg97, Ser148, Tyr149, Ser174, Trp176, and His267.

The protein belongs to the esterase D family.

The protein resides in the cytoplasm. It carries out the reaction triacetylfusarinine C + 3 H2O = 3 N-acetylfusarinine + Fe(3+). Displays specific triacetylfusarinine C (TAFC) esterase activity but does not hydrolyze fusarinine C, which has the same core structure as TAFC. Hydrolysis optimizes but is not essential for TAFC-mediated iron uptake. Both extra- and intracellular siderophores have been shown to be crucial for the virulence. Subsequent to chelation of iron and uptake, FsC and TAFC are hydrolyzed and the iron is transferred to the metabolism or to the intracellular siderophore ferricrocin (FC) for transport and storage of iron. Hydrolyzes both TAFC and DF-TAFC with equal efficiencies, suggesting that its function might not be restricted to the release of iron from the siderophore but might also include the degradation of the iron-free chelator to protect cells. In Aspergillus fumigatus (strain ATCC MYA-4609 / CBS 101355 / FGSC A1100 / Af293) (Neosartorya fumigata), this protein is Siderophore triacetylfusarinine C esterase.